A 190-amino-acid chain; its full sequence is Orotate phosphoribosyltransferase (190 aa).

5-phospho-alpha-D-ribose 1-diphosphate is bound at residue 114-122; that stretch reads EDVVTTGGS. Orotate is bound by residues Thr-118 and Arg-146.

It belongs to the purine/pyrimidine phosphoribosyltransferase family. PyrE subfamily. Homodimer. It depends on Mg(2+) as a cofactor.

It catalyses the reaction orotidine 5'-phosphate + diphosphate = orotate + 5-phospho-alpha-D-ribose 1-diphosphate. Its pathway is pyrimidine metabolism; UMP biosynthesis via de novo pathway; UMP from orotate: step 1/2. Its function is as follows. Catalyzes the transfer of a ribosyl phosphate group from 5-phosphoribose 1-diphosphate to orotate, leading to the formation of orotidine monophosphate (OMP). The sequence is that of Orotate phosphoribosyltransferase from Caldanaerobacter subterraneus subsp. tengcongensis (strain DSM 15242 / JCM 11007 / NBRC 100824 / MB4) (Thermoanaerobacter tengcongensis).